The following is a 376-amino-acid chain: Succinyl-diaminopimelate desuccinylase 1 (376 aa).

His67 is a Zn(2+) binding site. Asp69 is an active-site residue. Asp100 contributes to the Zn(2+) binding site. The active-site Proton acceptor is Glu134. 3 residues coordinate Zn(2+): Glu135, Glu163, and His349.

This sequence belongs to the peptidase M20A family. DapE subfamily. Homodimer. Zn(2+) serves as cofactor. Requires Co(2+) as cofactor.

The catalysed reaction is N-succinyl-(2S,6S)-2,6-diaminopimelate + H2O = (2S,6S)-2,6-diaminopimelate + succinate. It functions in the pathway amino-acid biosynthesis; L-lysine biosynthesis via DAP pathway; LL-2,6-diaminopimelate from (S)-tetrahydrodipicolinate (succinylase route): step 3/3. Catalyzes the hydrolysis of N-succinyl-L,L-diaminopimelic acid (SDAP), forming succinate and LL-2,6-diaminopimelate (DAP), an intermediate involved in the bacterial biosynthesis of lysine and meso-diaminopimelic acid, an essential component of bacterial cell walls. The polypeptide is Succinyl-diaminopimelate desuccinylase 1 (Shewanella loihica (strain ATCC BAA-1088 / PV-4)).